The sequence spans 126 residues: Adenosine 5'-monophosphoramidase HINT1 (126 aa).

At Ala2 the chain carries N-acetylalanine. The region spanning 18–126 is the HIT domain; that stretch reads IFGKIIRKEI…GGRQMHWPPG (109 aa). An N6-acetyllysine mark is found at Lys21 and Lys30. 43–44 lines the AMP pocket; sequence DI. Residues Ser45 and Ser72 each carry the phosphoserine modification. AMP-binding positions include Asn99, 105–107, and 112–114; these read GQS and HLH. The short motif at 110–114 is the Histidine triad motif element; sequence HVHLH. His112 functions as the Tele-AMP-histidine intermediate in the catalytic mechanism.

This sequence belongs to the HINT family. Homodimer. Interacts with CDK7. Interacts with RUVBL1 and RUVBL2 and is associated with the LEF1/TCF1-CTNNB1 complex and with a KAT5 histone acetyltransferase complex. Identified in a complex with MITF and CTNNB1. Interacts with CDC34 and RBX1, and is part of a SCF (SKP2-CUL1-F-box protein) E3 ubiquitin-protein ligase complex. Interacts with SUMO1, SUMO2 and RGS17. Interacts with the Ten-1 ICD form of TENM1. Interacts with CALM1; interaction increases in the presence of calcium ions.

It localises to the cytoplasm. Its subcellular location is the nucleus. It catalyses the reaction adenosine 5'-phosphoramidate + H2O = AMP + NH4(+). Its function is as follows. Exhibits adenosine 5'-monophosphoramidase activity, hydrolyzing purine nucleotide phosphoramidates with a single phosphate group such as adenosine 5'monophosphoramidate (AMP-NH2) to yield AMP and NH2. Hydrolyzes adenosine 5'monophosphomorpholidate (AMP-morpholidate) and guanosine 5'monophosphomorpholidate (GMP-morpholidate). Hydrolyzes lysyl-AMP (AMP-N-epsilon-(N-alpha-acetyl lysine methyl ester)) generated by lysine tRNA ligase, as well as Met-AMP, His-AMP and Asp-AMP, lysyl-GMP (GMP-N-epsilon-(N-alpha-acetyl lysine methyl ester)) and AMP-N-alanine methyl ester. Can also convert adenosine 5'-O-phosphorothioate and guanosine 5'-O-phosphorothioate to the corresponding nucleoside 5'-O-phosphates with concomitant release of hydrogen sulfide. In addition, functions as a scaffolding protein that modulates transcriptional activation by the LEF1/TCF1-CTNNB1 complex and by the complex formed with MITF and CTNNB1. Modulates p53/TP53 levels and p53/TP53-mediated apoptosis. Modulates proteasomal degradation of target proteins by the SCF (SKP2-CUL1-F-box protein) E3 ubiquitin-protein ligase complex. Also exhibits SUMO-specific isopeptidase activity, deconjugating SUMO1 from RANGAP1 and RGS17. The chain is Adenosine 5'-monophosphoramidase HINT1 (HINT1) from Pongo abelii (Sumatran orangutan).